Consider the following 485-residue polypeptide: Vacuolar fusion protein CCZ1 homolog (485 aa).

This sequence belongs to the CCZ1 family. In terms of assembly, component of the Mon1-Ccz1 guanyl-nucleotide exchange factor complex made up of Mon1, Ccz1 and Bulli; the interaction of Bulli with the Mon1-Ccz1 heterodimer is mediated via the C-terminal Mic1 domain of Bulli. Mon1 and Ccz1 form a stable complex which displays Rab7 GEF activity with or without Bulli; GEF activity is enhanced by Bulli possibly by improving membrane association of the complex. Interacts with Rab5 and Rab7; preferentially binds GTP-bound Rab5 and GDP-bound Rab7.

The protein resides in the cytoplasm. The protein localises to the cytosol. Its activity is regulated as follows. The Rab7 guanyl-nucleotide exchange factor (GEF) activity of the Mon1-Ccz1 complex is autoinhibited by the N-terminal disordered region of Mon1. GEF activity is stimulated by Rab5-mediated recruitment to membranes. Its function is as follows. Part of the Mon1-Ccz1 guanyl-nucleotide exchange factor complex specific for Rab7 that promotes the exchange of GDP to GTP, converting Rab7 from an inactive GDP-bound form into an active GTP-bound form. Required for recruitment of Rab7 to endosomal and autophagosomal membranes to mediate endolysosomal and autolysosomal vesicle maturation. Required for fusion of multivesicular bodies and lysosomes but not their formation or trafficking. Involved in the replacement of Rab5 (and possibly Rab4) with Rab7, also known as Rab conversion or the Rab cascade, during endosomal maturation. The Mon1-Ccz1 complex is recruited to phosphatidylinositol 3-phosphate (PtdIns[3]P) enriched membranes by Rab5, which stimulates recruitment and guanyl-nucleotide exchange of Rab7. Together with Rab7 required for autolysosome formation in fat cells and autophagic degradation during starvation-induced basal and developmental autophagy. The polypeptide is Vacuolar fusion protein CCZ1 homolog (Drosophila melanogaster (Fruit fly)).